The sequence spans 545 residues: Chaperonin GroEL (545 aa).

Residues 29–32 (TLGP), 86–90 (DGTTT), G413, 476–478 (NAA), and D492 contribute to the ATP site.

This sequence belongs to the chaperonin (HSP60) family. In terms of assembly, forms a cylinder of 14 subunits composed of two heptameric rings stacked back-to-back. Interacts with the co-chaperonin GroES.

The protein localises to the cytoplasm. It catalyses the reaction ATP + H2O + a folded polypeptide = ADP + phosphate + an unfolded polypeptide.. In terms of biological role, together with its co-chaperonin GroES, plays an essential role in assisting protein folding. The GroEL-GroES system forms a nano-cage that allows encapsulation of the non-native substrate proteins and provides a physical environment optimized to promote and accelerate protein folding. The sequence is that of Chaperonin GroEL from Oceanobacillus iheyensis (strain DSM 14371 / CIP 107618 / JCM 11309 / KCTC 3954 / HTE831).